The chain runs to 306 residues: Protein-methionine-sulfoxide reductase catalytic subunit MsrP (306 aa).

The tat-type signal signal peptide spans 1-44 (MLIRHAPDLTDNDVTGHGLYLRRRDFIGGAAGLGLMAAAGSASA). Residues Asn-69, 72-73 (YE), Cys-127, Thr-162, Asn-210, Arg-215, and 226-228 (GIK) each bind Mo-molybdopterin.

The protein belongs to the MsrP family. As to quaternary structure, heterodimer of a catalytic subunit (MsrP) and a heme-binding subunit (MsrQ). Mo-molybdopterin is required as a cofactor. Predicted to be exported by the Tat system. The position of the signal peptide cleavage has not been experimentally proven.

It is found in the periplasm. It catalyses the reaction L-methionyl-[protein] + a quinone + H2O = L-methionyl-(S)-S-oxide-[protein] + a quinol. The catalysed reaction is L-methionyl-[protein] + a quinone + H2O = L-methionyl-(R)-S-oxide-[protein] + a quinol. Part of the MsrPQ system that repairs oxidized periplasmic proteins containing methionine sulfoxide residues (Met-O), using respiratory chain electrons. Thus protects these proteins from oxidative-stress damage caused by reactive species of oxygen and chlorine generated by the host defense mechanisms. MsrPQ is essential for the maintenance of envelope integrity under bleach stress, rescuing a wide series of structurally unrelated periplasmic proteins from methionine oxidation. The catalytic subunit MsrP is non-stereospecific, being able to reduce both (R-) and (S-) diastereoisomers of methionine sulfoxide. This chain is Protein-methionine-sulfoxide reductase catalytic subunit MsrP, found in Caulobacter sp. (strain K31).